Consider the following 255-residue polypeptide: Acetyl-coenzyme A carboxylase carboxyl transferase subunit alpha (255 aa).

Positions 1 to 235 (MNIAKIVREA…KKELQTELAR (235 aa)) constitute a CoA carboxyltransferase C-terminal domain.

Belongs to the AccA family. As to quaternary structure, acetyl-CoA carboxylase is a heterohexamer composed of biotin carboxyl carrier protein (AccB), biotin carboxylase (AccC) and two subunits each of ACCase subunit alpha (AccA) and ACCase subunit beta (AccD).

It localises to the cytoplasm. The catalysed reaction is N(6)-carboxybiotinyl-L-lysyl-[protein] + acetyl-CoA = N(6)-biotinyl-L-lysyl-[protein] + malonyl-CoA. The protein operates within lipid metabolism; malonyl-CoA biosynthesis; malonyl-CoA from acetyl-CoA: step 1/1. In terms of biological role, component of the acetyl coenzyme A carboxylase (ACC) complex. First, biotin carboxylase catalyzes the carboxylation of biotin on its carrier protein (BCCP) and then the CO(2) group is transferred by the carboxyltransferase to acetyl-CoA to form malonyl-CoA. The chain is Acetyl-coenzyme A carboxylase carboxyl transferase subunit alpha from Streptococcus pneumoniae serotype 19F (strain G54).